A 1214-amino-acid polypeptide reads, in one-letter code: Sodium bicarbonate cotransporter 3 (1214 aa).

Residues 1–12 (MERFRLEKKLPG) show a composition bias toward basic and acidic residues. Disordered stretches follow at residues 1 to 22 (MERF…VDLG) and 52 to 93 (SKES…PSQR). At 1 to 608 (MERFRLEKKL…DFKDALSLQC (608 aa)) the chain is on the extracellular side. A phosphoserine mark is found at serine 52, serine 55, serine 84, serine 150, leucine 165, and cysteine 168. Over residues 55 to 72 (SRRRHRHRGHKHHHRRRK) the composition is skewed to basic residues. Positions 73-85 (DKESDKEDGRESP) are enriched in basic and acidic residues. A glycan (N-linked (GlcNAc...) asparagine) is linked at asparagine 171. Phosphoserine occurs at positions 233, 242, 255, 258, 260, 263, 264, and 267. A glycan (N-linked (GlcNAc...) asparagine) is linked at asparagine 269. 3 disordered regions span residues 289–346 (SRAG…IPTV), 362–408 (EEQK…ENST), and 552–572 (FHNG…HHAG). The span at 303-313 (VPTPQNSPPSS) shows a compositional bias: pro residues. A compositionally biased stretch (low complexity) spans 314–332 (PSISRLTSRSSQESQRQAP). The segment covering 379-392 (SPQSAPGNLDNSKS) has biased composition (polar residues). At serine 382 the chain carries Phosphoserine. An N-linked (GlcNAc...) asparagine glycan is attached at asparagine 398. A phosphoserine mark is found at serine 400 and serine 403. Asparagine 406 is a glycosylation site (N-linked (GlcNAc...) asparagine). 2 positions are modified to phosphoserine: serine 407 and serine 556. Threonine 557 carries the phosphothreonine modification. Over residues 563-572 (TPKEAAHHAG) the composition is skewed to basic and acidic residues. The chain crosses the membrane as a helical span at residues 609–629 (LASILFLYCACMSPVITFGGL). Residues 630-637 (LGEATEGR) lie on the Cytoplasmic side of the membrane. A helical transmembrane segment spans residues 638–658 (ISAIESLFGASLTGIAYSLFA). The Extracellular portion of the chain corresponds to 659 to 695 (GQPLTILGSTGPVLVFEKILYKFCRDYQLSYLSLRTS). Residues 696–716 (IGLWTSFLCIVLVATDASSLV) form a helical membrane-spanning segment. The Cytoplasmic segment spans residues 717–725 (CYITRFTEE). The helical transmembrane segment at 726–746 (AFAALICIIFIYEALEKLFDL) threads the bilayer. Lysine 742 bears the Phosphoserine mark. Residues 747–817 (GETYAFNMHN…VFLGSACGHH (71 aa)) are Extracellular-facing. Residues cysteine 766 and cysteine 768 are joined by a disulfide bond. A phosphoserine mark is found at proline 771 and proline 774. Residue asparagine 776 is glycosylated (N-linked (GlcNAc...) asparagine). Alanine 780 carries the phosphoserine modification. Asparagine 786 and asparagine 791 each carry an N-linked (GlcNAc...) asparagine glycan. Cysteine 802 and cysteine 814 are joined by a disulfide. The helical transmembrane segment at 818–838 (GPYIPDVLFWCVILFFTTFFL) threads the bilayer. Over 839–861 (SSFLKQFKTKRYFPTKVRSTISD) the chain is Cytoplasmic. Residues 862 to 882 (FAVFLTIVIMVTIDYLVGVPS) form a helical membrane-spanning segment. Over 883–908 (PKLHVPEKFEPTHPERGWIISPLGDN) the chain is Extracellular. A helical transmembrane segment spans residues 909–929 (PWWTLLIAAIPALLCTILIFM). Topologically, residues 930–954 (DQQITAVIINRKEHKLKKGAGYHLD) are cytoplasmic. Residues 955-975 (LLMVGVMLGVCSVMGLPWFVA) form a helical membrane-spanning segment. Over 976–1011 (ATVLSISHVNSLKVESECSAPGEQPKFLGIREQRVT) the chain is Extracellular. Residues glutamate 1007, valine 1010, and phenylalanine 1016 each carry the phosphoserine modification. 2 essential for cell membrane localization and transport activity regions span residues 1008–1131 (QRVT…KREL) and 1127–1214 (TKRE…ETSL). A helical membrane pass occupies residues 1012-1032 (GLMIFILMGLSVFMTSVLKFI). Over 1033–1034 (PM) the chain is Cytoplasmic. The helical transmembrane segment at 1035–1055 (PVLYGVFLYMGVSSLKGIQLF) threads the bilayer. Residues 1056–1092 (DRIKLFGMPAKHQPDLIYLRYVPLWKVHIFTVIQLTC) are Extracellular-facing. Residues tyrosine 1073, valine 1077, serine 1102, alanine 1105, valine 1106, proline 1109, methionine 1111, and leucine 1115 each carry the phosphoserine modification. A helical transmembrane segment spans residues 1093–1113 (LVLLWVIKVSAAAVVFPMMVL). Residues 1114 to 1214 (ALVFVRKLMD…KKYVDAETSL (101 aa)) are Cytoplasmic-facing. The tract at residues 1134–1136 (LDD) is CA2-binding. Positions 1144–1162 (KKEDDKKKKEKEEAERMLQ) are enriched in basic and acidic residues. The interval 1144–1169 (KKEDDKKKKEKEEAERMLQDDDDTVH) is disordered. Threonine 1167 is subject to Phosphothreonine. Serine 1176, serine 1188, aspartate 1201, and serine 1213 each carry phosphoserine. The short motif at 1211–1214 (ETSL) is the PDZ-binding element.

Belongs to the anion exchanger (TC 2.A.31) family. In terms of assembly, interacts with CFTR through NHERF1/EBP50. Interacts with USH1C. Forms a complex with ATP6V1B1 and NHERF1/EBP50. Interacts in a pH dependent-manner with CA2/carbonic anhydrase 2. In terms of tissue distribution, highly expressed in testis and spleen. Also expressed in retina, colon, small intestine, ovary, thymus, prostate, muscle, heart and kidney. Expressed in skeletal muscle and heart muscle.

Its subcellular location is the basolateral cell membrane. The protein resides in the apical cell membrane. The protein localises to the cell projection. It is found in the stereocilium. It localises to the cell membrane. The enzyme catalyses hydrogencarbonate(in) + Na(+)(in) = hydrogencarbonate(out) + Na(+)(out). With respect to regulation, transporter activity is regulated by CA2/carbonic anhydrase 2, cAMP and PKA. Insensitive to stilbene derivatives. Inhibited by 5-(N-ethyl-N-isopropyl)-amiloride (EIPA). Functionally, electroneutral sodium- and bicarbonate-dependent cotransporter with a Na(+):HCO3(-) 1:1 stoichiometry. Mediates the sodium-dependent bicarbonate transport important for pH recovery after acid load as well as for regulation of steady-state pH in the duodenum and vascular smooth muscle cells. Plays a key role in macrophage acidification, mediating bicarbonate import into the cytoplasm which is crucial for net acid extrusion and maintenance of cytoplasmic pH during phagocytosis. Provides cellular bicarbonate for de novo purine and pyrimidine synthesis and is a key mediator of de novo nucleotide synthesis downstream of mTORC1 signaling in proliferating cells. Plays a key role in macrophage acidification, mediating bicarbonate import into the cytoplasm which is crucial for net acid extrusion and maintenance of cytoplasmic pH during phagocytosis. In Homo sapiens (Human), this protein is Sodium bicarbonate cotransporter 3 (SLC4A7).